Here is a 777-residue protein sequence, read N- to C-terminus: Type IV pilus biogenesis and competence protein PilQ (777 aa).

A signal peptide spans methionine 1–alanine 24. Composition is skewed to low complexity over residues alanine 135–proline 154 and alanine 197–glutamine 233. Disordered regions lie at residues alanine 135 to threonine 156 and alanine 197 to isoleucine 236.

It belongs to the bacterial secretin family. PilQ subfamily. As to quaternary structure, homododecamer. Tetramer of trimer.

It is found in the cell outer membrane. In terms of biological role, required for type IV pilus biogenesis and competence. Could function as a pore for exit of the pilus but also as a channel for entry of heme and antimicrobial agents and uptake of transforming DNA. This chain is Type IV pilus biogenesis and competence protein PilQ (pilQ), found in Neisseria meningitidis serogroup B / serotype 15 (strain H44/76).